A 189-amino-acid chain; its full sequence is Interferon alpha-1 (189 aa).

The N-terminal stretch at 1–23 (MARLCAFLMVLAVLSYWPTCSLG) is a signal peptide. 2 disulfide bridges follow: C24-C122 and C52-C162. N101 carries N-linked (GlcNAc...) asparagine glycosylation.

The protein belongs to the alpha/beta interferon family. In terms of assembly, interacts with CR2. Glycosylated.

The protein resides in the secreted. Its function is as follows. Produced by macrophages, IFN-alpha have antiviral activities. Interferon stimulates the production of two enzymes: a protein kinase and an oligoadenylate synthetase. This is Interferon alpha-1 (Ifna1) from Mus musculus (Mouse).